The chain runs to 506 residues: 2,3-bisphosphoglycerate-independent phosphoglycerate mutase (506 aa).

Mn(2+)-binding residues include Asp13 and Ser63. Ser63 acts as the Phosphoserine intermediate in catalysis. Residues His124, 153-154 (RD), Arg183, Arg189, 254-257 (RADR), and Lys330 each bind substrate. Mn(2+) contacts are provided by Asp396, His400, Asp437, His438, and His456.

It belongs to the BPG-independent phosphoglycerate mutase family. In terms of assembly, monomer. Mn(2+) serves as cofactor.

The enzyme catalyses (2R)-2-phosphoglycerate = (2R)-3-phosphoglycerate. It participates in carbohydrate degradation; glycolysis; pyruvate from D-glyceraldehyde 3-phosphate: step 3/5. Its function is as follows. Catalyzes the interconversion of 2-phosphoglycerate and 3-phosphoglycerate. The polypeptide is 2,3-bisphosphoglycerate-independent phosphoglycerate mutase (Cereibacter sphaeroides (strain ATCC 17025 / ATH 2.4.3) (Rhodobacter sphaeroides)).